Here is a 70-residue protein sequence, read N- to C-terminus: Dermaseptin-H3 (70 aa).

A signal peptide spans 1–22 (MAFLKKSLFLVLFLGMVSLSIC). Positions 23–43 (EEEKRENEDEELQEDDEQSEM) are excised as a propeptide. The interval 25–44 (EKRENEDEELQEDDEQSEMK) is disordered. Residues 30–40 (EDEELQEDDEQ) show a composition bias toward acidic residues. Leu-70 carries the post-translational modification Leucine amide.

Expressed by the skin glands.

It is found in the secreted. In terms of biological role, has antibacterial activity against the Gram-negative bacteria E.coli and P.aeruginosa, and the Gram-positive bacteria S.aureus and M.luteus. Has antiprotozoal activity against L.amazonensis. No hemolytic activity. The protein is Dermaseptin-H3 of Pithecopus hypochondrialis (Orange-legged leaf frog).